Consider the following 120-residue polypeptide: NAD(P)H-quinone oxidoreductase subunit 3 (120 aa).

3 helical membrane passes run 10-30, 64-84, and 89-109; these read FLGF…TNLI, MFAL…PWAV, and LGLL…IALA.

Belongs to the complex I subunit 3 family. In terms of assembly, NDH-1 can be composed of about 15 different subunits; different subcomplexes with different compositions have been identified which probably have different functions.

It localises to the cellular thylakoid membrane. The enzyme catalyses a plastoquinone + NADH + (n+1) H(+)(in) = a plastoquinol + NAD(+) + n H(+)(out). The catalysed reaction is a plastoquinone + NADPH + (n+1) H(+)(in) = a plastoquinol + NADP(+) + n H(+)(out). In terms of biological role, NDH-1 shuttles electrons from an unknown electron donor, via FMN and iron-sulfur (Fe-S) centers, to quinones in the respiratory and/or the photosynthetic chain. The immediate electron acceptor for the enzyme in this species is believed to be plastoquinone. Couples the redox reaction to proton translocation, and thus conserves the redox energy in a proton gradient. Cyanobacterial NDH-1 also plays a role in inorganic carbon-concentration. The protein is NAD(P)H-quinone oxidoreductase subunit 3 of Prochlorococcus marinus (strain MIT 9301).